Reading from the N-terminus, the 465-residue chain is Methionine aminopeptidase 2-1 (465 aa).

Residues 1-100 (MGSKTAENES…QSSPPRIPLA (100 aa)) form a disordered region. Residues 31 to 40 (RGAHWSRDGD) are compositionally biased toward basic and acidic residues. Over residues 75–87 (SKKRKKRPKKKTS) the composition is skewed to basic residues. His-216 contributes to the substrate binding site. The a divalent metal cation site is built by Asp-237, Asp-248, and His-317. His-325 is a binding site for substrate. 2 residues coordinate a divalent metal cation: Glu-350 and Glu-446.

Belongs to the peptidase M24A family. Methionine aminopeptidase eukaryotic type 2 subfamily. It depends on Co(2+) as a cofactor. Requires Zn(2+) as cofactor. Mn(2+) is required as a cofactor. Fe(2+) serves as cofactor.

It localises to the cytoplasm. It carries out the reaction Release of N-terminal amino acids, preferentially methionine, from peptides and arylamides.. Its function is as follows. Cotranslationally removes the N-terminal methionine from nascent proteins. The N-terminal methionine is often cleaved when the second residue in the primary sequence is small and uncharged (Met-Ala-, Cys, Gly, Pro, Ser, Thr, or Val). This is Methionine aminopeptidase 2-1 from Penicillium rubens (strain ATCC 28089 / DSM 1075 / NRRL 1951 / Wisconsin 54-1255) (Penicillium chrysogenum).